The chain runs to 160 residues: Cyclic pyranopterin monophosphate synthase (160 aa).

Substrate-binding positions include leucine 76–histidine 78 and methionine 114–glutamate 115. Aspartate 129 is a catalytic residue.

It belongs to the MoaC family. In terms of assembly, homohexamer; trimer of dimers.

It catalyses the reaction (8S)-3',8-cyclo-7,8-dihydroguanosine 5'-triphosphate = cyclic pyranopterin phosphate + diphosphate. Its pathway is cofactor biosynthesis; molybdopterin biosynthesis. Its function is as follows. Catalyzes the conversion of (8S)-3',8-cyclo-7,8-dihydroguanosine 5'-triphosphate to cyclic pyranopterin monophosphate (cPMP). The protein is Cyclic pyranopterin monophosphate synthase of Saccharophagus degradans (strain 2-40 / ATCC 43961 / DSM 17024).